Here is a 498-residue protein sequence, read N- to C-terminus: Glutamyl-tRNA(Gln) amidotransferase subunit A (498 aa).

Active-site charge relay system residues include lysine 85 and serine 160. The Acyl-ester intermediate role is filled by serine 184.

It belongs to the amidase family. GatA subfamily. As to quaternary structure, heterotrimer of A, B and C subunits.

The enzyme catalyses L-glutamyl-tRNA(Gln) + L-glutamine + ATP + H2O = L-glutaminyl-tRNA(Gln) + L-glutamate + ADP + phosphate + H(+). Functionally, allows the formation of correctly charged Gln-tRNA(Gln) through the transamidation of misacylated Glu-tRNA(Gln) in organisms which lack glutaminyl-tRNA synthetase. The reaction takes place in the presence of glutamine and ATP through an activated gamma-phospho-Glu-tRNA(Gln). The polypeptide is Glutamyl-tRNA(Gln) amidotransferase subunit A (Mycolicibacterium vanbaalenii (strain DSM 7251 / JCM 13017 / BCRC 16820 / KCTC 9966 / NRRL B-24157 / PYR-1) (Mycobacterium vanbaalenii)).